A 338-amino-acid polypeptide reads, in one-letter code: Ketol-acid reductoisomerase (NADP(+)) (338 aa).

One can recognise a KARI N-terminal Rossmann domain in the interval 1–181 (MNIYYDKDCD…GGGRAGIIET (181 aa)). NADP(+) is bound by residues 24–27 (YGSQ), Arg-47, Ser-50, Ser-52, and 82–85 (DEHQ). The active site involves His-107. Gly-133 lines the NADP(+) pocket. The region spanning 182-327 (AFREETETDL…ERLRSMMPWI (146 aa)) is the KARI C-terminal knotted domain. Positions 190, 194, 226, and 230 each coordinate Mg(2+). Ser-251 provides a ligand contact to substrate.

The protein belongs to the ketol-acid reductoisomerase family. It depends on Mg(2+) as a cofactor.

It carries out the reaction (2R)-2,3-dihydroxy-3-methylbutanoate + NADP(+) = (2S)-2-acetolactate + NADPH + H(+). It catalyses the reaction (2R,3R)-2,3-dihydroxy-3-methylpentanoate + NADP(+) = (S)-2-ethyl-2-hydroxy-3-oxobutanoate + NADPH + H(+). The protein operates within amino-acid biosynthesis; L-isoleucine biosynthesis; L-isoleucine from 2-oxobutanoate: step 2/4. It functions in the pathway amino-acid biosynthesis; L-valine biosynthesis; L-valine from pyruvate: step 2/4. Involved in the biosynthesis of branched-chain amino acids (BCAA). Catalyzes an alkyl-migration followed by a ketol-acid reduction of (S)-2-acetolactate (S2AL) to yield (R)-2,3-dihydroxy-isovalerate. In the isomerase reaction, S2AL is rearranged via a Mg-dependent methyl migration to produce 3-hydroxy-3-methyl-2-ketobutyrate (HMKB). In the reductase reaction, this 2-ketoacid undergoes a metal-dependent reduction by NADPH to yield (R)-2,3-dihydroxy-isovalerate. The polypeptide is Ketol-acid reductoisomerase (NADP(+)) (Nitrosococcus oceani (strain ATCC 19707 / BCRC 17464 / JCM 30415 / NCIMB 11848 / C-107)).